The primary structure comprises 84 residues: Large ribosomal subunit protein bL28 (84 aa).

Belongs to the bacterial ribosomal protein bL28 family.

The chain is Large ribosomal subunit protein bL28 from Clostridium perfringens (strain 13 / Type A).